A 212-amino-acid polypeptide reads, in one-letter code: Large ribosomal subunit protein uL1 (212 aa).

It belongs to the universal ribosomal protein uL1 family. As to quaternary structure, part of the 50S ribosomal subunit.

Binds directly to 23S rRNA. Probably involved in E site tRNA release. In terms of biological role, protein L1 is also a translational repressor protein, it controls the translation of its operon by binding to its mRNA. The chain is Large ribosomal subunit protein uL1 from Methanosphaera stadtmanae (strain ATCC 43021 / DSM 3091 / JCM 11832 / MCB-3).